The sequence spans 1019 residues: Photoactivated adenylate cyclase subunit alpha-like protein FB (1019 aa).

Residues 55-148 (LRRLMYLSAS…GRLYGEWHMK (94 aa)) enclose the BLUF 1 domain. In terms of domain architecture, Guanylate cyclase 1 spans 204–332 (VVTFIYLVEF…DCINTASRIT (129 aa)). The region spanning 467-559 (LITLTYISQA…REYGSPLDMT (93 aa)) is the BLUF 2 domain. One can recognise a Guanylate cyclase 2 domain in the interval 615-744 (VLLATDICSF…EVSARVMEVV (130 aa)). A compositionally biased stretch (low complexity) spans 825–839 (APGRGAPAGGIPSSP). Residues 825–862 (APGRGAPAGGIPSSPKVRPPGRTNSVSSYTPDPNEALD) form a disordered region. The span at 846–855 (RTNSVSSYTP) shows a compositional bias: polar residues.

Belongs to the adenylyl cyclase class-4/guanylyl cyclase family. As to quaternary structure, heterotetramer of two alpha and two beta subunits.

The protein localises to the cell projection. It localises to the cilium. The protein resides in the flagellum. The protein is Photoactivated adenylate cyclase subunit alpha-like protein FB of Euglena gracilis.